The chain runs to 411 residues: Multidrug resistance protein MdtH (411 aa).

Transmembrane regions (helical) follow at residues 13–33 (YFLLMDNILVVMGFYMVFPLI), 45–65 (ALLVGIALGLRQFIQQGLGIF), 73–95 (LGAKPMIITGMLMRALGFIFMGI), 99–116 (PWLLWVSCILSALGGTLF), 139–159 (LLMIQDSTCAMVGALLGSWLL), 165–185 (LVCLAGALLFLFAAILNAWLL), 213–233 (YVFTLTGYYILSVQVMLILPI), 243–263 (AAVRWTYAIEAALSLSLLYPI), 288–308 (IIPIGMIHNLQVLFLLIGIFY), 340–360 (LGLALGGAIGYSGGGWLYDMG), and 365–385 (IPQLPWVMLGMIGLITLLGFY).

It belongs to the major facilitator superfamily. DHA1 family. MdtH (TC 2.A.1.2.21) subfamily.

It is found in the cell membrane. The sequence is that of Multidrug resistance protein MdtH from Baumannia cicadellinicola subsp. Homalodisca coagulata.